The primary structure comprises 380 residues: Cytochrome b (380 aa).

Transmembrane regions (helical) follow at residues 34–54 (FGSL…LLAM), 78–99 (WLLH…FLHI), 114–134 (WNTG…GYVL), and 179–199 (FFAL…IHLM). Heme b contacts are provided by His84 and His98. Positions 183 and 197 each coordinate heme b. Residue His202 participates in a ubiquinone binding. 4 helical membrane-spanning segments follow: residues 227 to 247 (IKDI…TLFS), 289 to 309 (LGGV…PFLH), 321 to 341 (LSQT…WVGS), and 348 to 368 (FIII…ILFP).

Belongs to the cytochrome b family. The cytochrome bc1 complex contains 11 subunits: 3 respiratory subunits (MT-CYB, CYC1 and UQCRFS1), 2 core proteins (UQCRC1 and UQCRC2) and 6 low-molecular weight proteins (UQCRH/QCR6, UQCRB/QCR7, UQCRQ/QCR8, UQCR10/QCR9, UQCR11/QCR10 and a cleavage product of UQCRFS1). This cytochrome bc1 complex then forms a dimer. The cofactor is heme b.

It is found in the mitochondrion inner membrane. Functionally, component of the ubiquinol-cytochrome c reductase complex (complex III or cytochrome b-c1 complex) that is part of the mitochondrial respiratory chain. The b-c1 complex mediates electron transfer from ubiquinol to cytochrome c. Contributes to the generation of a proton gradient across the mitochondrial membrane that is then used for ATP synthesis. This is Cytochrome b (MT-CYB) from Meleagris gallopavo (Wild turkey).